Consider the following 673-residue polypeptide: Bifunctional lycopene cyclase/phytoene synthase (673 aa).

The segment at 1–251 is lycopene beta-cyclase; that stretch reads MTALAYYQIH…IVLGLSACDH (251 aa). The next 7 membrane-spanning stretches (helical) occupy residues 9–29, 36–56, 81–101, 117–137, 157–177, 187–207, and 226–246; these read IHLI…SPIL, KISI…SWII, YEEY…YVLA, SALS…LFTA, LSLL…EYAF, TIAA…VAVG, and VLPI…VLGL. A phytoene synthase region spans residues 258 to 673; sequence LHGRTIYGNK…SVVMSGWEGQ (416 aa). The tract at residues 376–399 is disordered; it reads KILSSPLLPPSHPSRPTGMYPLPP.

In the N-terminal section; belongs to the lycopene beta-cyclase family. This sequence in the C-terminal section; belongs to the phytoene/squalene synthase family.

Its subcellular location is the membrane. It catalyses the reaction all-trans-lycopene = gamma-carotene. The enzyme catalyses gamma-carotene = all-trans-beta-carotene. It carries out the reaction 2 (2E,6E,10E)-geranylgeranyl diphosphate = 15-cis-phytoene + 2 diphosphate. The protein operates within carotenoid biosynthesis; beta-carotene biosynthesis. It participates in carotenoid biosynthesis; phytoene biosynthesis; all-trans-phytoene from geranylgeranyl diphosphate: step 1/1. Functionally, bifunctional enzyme that catalyzes the reactions from geranylgeranyl diphosphate to phytoene (phytoene synthase) and lycopene to beta-carotene via the intermediate gamma-carotene (lycopene cyclase). The cyclase preferentially catalyzes the symmetric cyclization of both ends of the substrate to produce dicyclic carotenoids. Beta-carotene is further processed to the acidic carotenoid astaxanthin. This chain is Bifunctional lycopene cyclase/phytoene synthase, found in Phaffia rhodozyma (Yeast).